Here is a 474-residue protein sequence, read N- to C-terminus: Protein anachronism (474 aa).

The signal sequence occupies residues 1 to 33 (MASAMRGEKCERSRIRELVLILSLITMAGDSRA). N-linked (GlcNAc...) asparagine glycans are attached at residues Asn-54, Asn-62, Asn-73, Asn-116, and Asn-144. A disordered region spans residues 173 to 195 (NPGQTREHNPGQASTQPISTENP). Positions 183–195 (GQASTQPISTENP) are enriched in polar residues. The N-linked (GlcNAc...) asparagine glycan is linked to Asn-342. A compositionally biased stretch (polar residues) spans 359-372 (FIESTTSNSPTIDN). The disordered stretch occupies residues 359–474 (FIESTTSNSP…HHRIPAHKQE (116 aa)). Basic residues-rich tracts occupy residues 390–400 (LVHHRRHHHNH) and 437–474 (NHHRHRTGHHHPHHQLHQHHHHHHRHTKHHRIPAHKQE).

In terms of tissue distribution, synthesized in some glial cells and secreted.

It is found in the secreted. In terms of biological role, negatively regulates proliferation of neuronal precursor cells, thereby controlling the timing of postembryonic neurogenesis. The sequence is that of Protein anachronism (ana) from Drosophila melanogaster (Fruit fly).